We begin with the raw amino-acid sequence, 1143 residues long: Disease resistance protein Pikm1-TS (1143 aa).

The structured coiled coil (CC) domain stretch occupies residues 1–190; sequence MEAAAMAVTA…PLRIMGGEMQ (190 aa). The HMA domain occupies 189-258; it reads MQKIVFKIPM…KVGPAMFLEV (70 aa). The interval 191–264 is HMA-like domain; the sequence is KIVFKIPMVD…FLEVSQVKED (74 aa). The 289-residue stretch at 282–570 folds into the NB-ARC domain; the sequence is HEVKTICILG…WIAEGFVSEE (289 aa). LRR repeat units follow at residues 681–706, 708–731, 732–754, 756–777, 778–800, 802–823, 824–848, 945–968, 979–1002, and 1004–1027; these read FKRL…ICEQ, SLRV…MRKL, KHLE…IGEL, HLRI…IREL, QHLH…VGKL, NLKI…IGEL, NHLQ…QISQ, MPNL…INGT, DSRV…EFKF, and AGPA…VFRC.

This sequence belongs to the disease resistance NB-LRR family. Interacts with AVR-Pik through its N-terminal part containing the HMA-like domain. Constitutively expressed.

Disease resistance (R) protein that specifically recognizes the AVR-Pik effector avirulence protein from M.oryzae. Resistance proteins guard the plant against pathogens that contain an appropriate avirulence protein via an indirect interaction with this avirulence protein. That triggers a defense system including the hypersensitive response, which restricts the pathogen growth. Contribution of Pikm-2 is required to recognize the effector avirulence protein AVR-Pik. This is Disease resistance protein Pikm1-TS from Oryza sativa subsp. japonica (Rice).